A 195-amino-acid polypeptide reads, in one-letter code: Calcineurin B homologous protein 1 (195 aa).

Residue Gly2 is the site of N-myristoyl glycine attachment. EF-hand domains follow at residues 26-61 (SQIT…AINP), 66-101 (IINA…KSKD), 110-145 (SRSN…MVGV), and 151-186 (QLGS…VDVE). Residues Asp123, Asp125, Asp127, Lys129, Glu134, Asp164, Asp166, Asp168, and Glu175 each coordinate Ca(2+).

The protein belongs to the calcineurin regulatory subunit family. CHP subfamily. As to quaternary structure, monomer. In terms of processing, phosphorylated. Calcium-binding or N-myristoylation are necessary for the Na(+)/H(+) exchange activities.

It localises to the nucleus. Its subcellular location is the cytoplasm. The protein resides in the cytoskeleton. The protein localises to the endomembrane system. It is found in the endoplasmic reticulum-Golgi intermediate compartment. It localises to the endoplasmic reticulum. Its subcellular location is the cell membrane. The protein resides in the membrane. Functionally, calcium-binding protein involved in different processes such as regulation of vesicular trafficking, plasma membrane Na(+)/H(+) exchanger and gene transcription. Involved in the constitutive exocytic membrane traffic. Mediates the association between microtubules and membrane-bound organelles of the endoplasmic reticulum and Golgi apparatus and is also required for the targeting and fusion of transcytotic vesicles (TCV) with the plasma membrane. Functions as an integral cofactor in cell pH regulation by controlling plasma membrane-type Na(+)/H(+) exchange activity. Inhibits serum- and GTPase-stimulated Na(+)/H(+) exchange. Plays a role as an inhibitor of ribosomal RNA transcription. Acts as a negative regulator of the calcineurin/NFAT signaling pathway. The protein is Calcineurin B homologous protein 1 (CHP1) of Gallus gallus (Chicken).